Here is a 218-residue protein sequence, read N- to C-terminus: Small ribosomal subunit protein uS3c (218 aa).

The KH type-2 domain maps to V47 to A118.

Belongs to the universal ribosomal protein uS3 family. As to quaternary structure, part of the 30S ribosomal subunit.

Its subcellular location is the plastid. The protein localises to the chloroplast. This chain is Small ribosomal subunit protein uS3c (rps3), found in Calycanthus floridus var. glaucus (Eastern sweetshrub).